The following is a 132-amino-acid chain: Small ribosomal subunit protein uS11c (132 aa).

Belongs to the universal ribosomal protein uS11 family. Part of the 30S ribosomal subunit.

The protein localises to the plastid. It localises to the chloroplast. The sequence is that of Small ribosomal subunit protein uS11c from Gnetum parvifolium (Small-leaved jointfir).